The sequence spans 726 residues: Serine/threonine-protein kinase PKH3 (726 aa).

Residues 10-271 (FLFREELGHG…LEQIKKHKWF (262 aa)) enclose the Protein kinase domain. ATP is bound by residues 16 to 24 (LGHGSYSTV) and lysine 39. Aspartate 136 serves as the catalytic Proton acceptor. Positions 629 to 679 (QDIPLPSPAKSSSNSGVSEPISKIPPRQLVSASEQSHKAKSEAHTKKANSY) are disordered. A compositionally biased stretch (basic and acidic residues) spans 663–673 (QSHKAKSEAHT).

It belongs to the protein kinase superfamily. Ser/Thr protein kinase family.

It carries out the reaction L-seryl-[protein] + ATP = O-phospho-L-seryl-[protein] + ADP + H(+). It catalyses the reaction L-threonyl-[protein] + ATP = O-phospho-L-threonyl-[protein] + ADP + H(+). Functionally, serine/threonine-protein kinase. The protein is Serine/threonine-protein kinase PKH3 (PKH3) of Eremothecium gossypii (strain ATCC 10895 / CBS 109.51 / FGSC 9923 / NRRL Y-1056) (Yeast).